The chain runs to 448 residues: Putative flavin-containing monooxygenase FMO GS-OX-like 10 (448 aa).

Gly-18–Gly-23 contributes to the FAD binding site. NADP(+) is bound at residue Gly-212 to Gly-217.

The protein belongs to the FMO family. Requires FAD as cofactor.

Catalyzes the conversion of methylthioalkyl glucosinolates of any chain length into methylsulfinylalkyl glucosinolates. The chain is Putative flavin-containing monooxygenase FMO GS-OX-like 10 from Arabidopsis thaliana (Mouse-ear cress).